A 797-amino-acid chain; its full sequence is Outer membrane protein assembly factor BamA (797 aa).

An N-terminal signal peptide occupies residues 1–21; it reads MKLKQIASALMMLGISPLALA. POTRA domains are found at residues 23–90, 91–171, 174–262, 265–344, and 347–421; these read FTIQ…VIER, PTIG…IDEG, AKIT…VHEG, FRWG…IEPG, and IYVN…LTER.

Belongs to the BamA family. As to quaternary structure, part of the Bam complex.

The protein resides in the cell outer membrane. In terms of biological role, part of the outer membrane protein assembly complex, which is involved in assembly and insertion of beta-barrel proteins into the outer membrane. The chain is Outer membrane protein assembly factor BamA from Neisseria meningitidis serogroup B (strain ATCC BAA-335 / MC58).